A 398-amino-acid polypeptide reads, in one-letter code: Argininosuccinate synthase (398 aa).

9–17 is a binding site for ATP; the sequence is AYSGGLDTS. L-citrulline is bound at residue Tyr-85. Gly-115 lines the ATP pocket. L-aspartate-binding residues include Thr-117, Asn-121, and Asp-122. L-citrulline is bound at residue Asn-121. L-citrulline is bound by residues Arg-125, Ser-173, Glu-258, and Tyr-270.

This sequence belongs to the argininosuccinate synthase family. Type 1 subfamily. Homotetramer.

The protein resides in the cytoplasm. It carries out the reaction L-citrulline + L-aspartate + ATP = 2-(N(omega)-L-arginino)succinate + AMP + diphosphate + H(+). Its pathway is amino-acid biosynthesis; L-arginine biosynthesis; L-arginine from L-ornithine and carbamoyl phosphate: step 2/3. The polypeptide is Argininosuccinate synthase (Streptococcus pneumoniae (strain Hungary19A-6)).